The sequence spans 157 residues: Class I hydrophobin rodA (157 aa).

A signal peptide spans 1–41; the sequence is MKFSIAAAVVAFAASVAALPPAHDSQFAGNGVGNKGNSNVK. The N-linked (GlcNAc...) asparagine glycan is linked to Asn47. 4 disulfide bridges follow: Cys57-Cys131, Cys65-Cys125, Cys66-Cys106, and Cys132-Cys150.

The protein belongs to the fungal hydrophobin family. As to quaternary structure, self-assembles to form functional amyloid fibrils called rodlets. Self-assembly into fibrillar rodlets occurs spontaneously at hydrophobic:hydrophilic interfaces and the rodlets further associate laterally to form amphipathic monolayers.

The protein resides in the secreted. The protein localises to the spore wall. Functionally, aerial growth, conidiation, and dispersal of filamentous fungi in the environment rely upon a capability of their secreting small amphipathic proteins called hydrophobins (HPBs) with low sequence identity. Class I can self-assemble into an outermost layer of rodlet bundles on aerial cell surfaces, conferring cellular hydrophobicity that supports fungal growth, development and dispersal; whereas Class II form highly ordered films at water-air interfaces through intermolecular interactions but contribute nothing to the rodlet structure. RodA is a class I hydrophobin that contributes to surface hydrophobicity, which is important for processes such as association of hyphae in reproductive structures, dispersal of aerial spores and adhesion of pathogens to host structures. Important for the formation of hydrophobic rodlet layers of asexually-produced spores. Promotes also biofilm formation and may enhance lignocellulose utilization via promoting a compact substrate-enzyme-fungus structure. This is Class I hydrophobin rodA from Emericella nidulans (strain FGSC A4 / ATCC 38163 / CBS 112.46 / NRRL 194 / M139) (Aspergillus nidulans).